A 467-amino-acid polypeptide reads, in one-letter code: Glycogen synthase (467 aa).

An ADP-alpha-D-glucose-binding site is contributed by Lys15.

Belongs to the glycosyltransferase 1 family. Bacterial/plant glycogen synthase subfamily.

The enzyme catalyses [(1-&gt;4)-alpha-D-glucosyl](n) + ADP-alpha-D-glucose = [(1-&gt;4)-alpha-D-glucosyl](n+1) + ADP + H(+). It functions in the pathway glycan biosynthesis; glycogen biosynthesis. Functionally, synthesizes alpha-1,4-glucan chains using ADP-glucose. This is Glycogen synthase from Desulfitobacterium hafniense (strain DSM 10664 / DCB-2).